A 600-amino-acid polypeptide reads, in one-letter code: Elongation factor 4 (600 aa).

One can recognise a tr-type G domain in the interval 5–187 (SRIRNFSIIA…DLIKKIPPPK (183 aa)). GTP-binding positions include 17–22 (DHGKST) and 134–137 (NKMD).

Belongs to the TRAFAC class translation factor GTPase superfamily. Classic translation factor GTPase family. LepA subfamily.

The protein localises to the cell inner membrane. It carries out the reaction GTP + H2O = GDP + phosphate + H(+). In terms of biological role, required for accurate and efficient protein synthesis under certain stress conditions. May act as a fidelity factor of the translation reaction, by catalyzing a one-codon backward translocation of tRNAs on improperly translocated ribosomes. Back-translocation proceeds from a post-translocation (POST) complex to a pre-translocation (PRE) complex, thus giving elongation factor G a second chance to translocate the tRNAs correctly. Binds to ribosomes in a GTP-dependent manner. The polypeptide is Elongation factor 4 (Marinobacter nauticus (strain ATCC 700491 / DSM 11845 / VT8) (Marinobacter aquaeolei)).